A 107-amino-acid chain; its full sequence is Large ribosomal subunit protein uL24 (107 aa).

The protein belongs to the universal ribosomal protein uL24 family. Part of the 50S ribosomal subunit.

In terms of biological role, one of two assembly initiator proteins, it binds directly to the 5'-end of the 23S rRNA, where it nucleates assembly of the 50S subunit. One of the proteins that surrounds the polypeptide exit tunnel on the outside of the subunit. This is Large ribosomal subunit protein uL24 from Streptomyces avermitilis (strain ATCC 31267 / DSM 46492 / JCM 5070 / NBRC 14893 / NCIMB 12804 / NRRL 8165 / MA-4680).